A 45-amino-acid chain; its full sequence is Large ribosomal subunit protein bL34 (45 aa).

Belongs to the bacterial ribosomal protein bL34 family.

The chain is Large ribosomal subunit protein bL34 from Salinispora arenicola (strain CNS-205).